The sequence spans 161 residues: uncharacterized protein (161 aa).

This is an uncharacterized protein from Haemophilus influenzae (strain ATCC 51907 / DSM 11121 / KW20 / Rd).